We begin with the raw amino-acid sequence, 71 residues long: Large ribosomal subunit protein bL31 (71 aa).

It belongs to the bacterial ribosomal protein bL31 family. Type A subfamily. As to quaternary structure, part of the 50S ribosomal subunit.

Its function is as follows. Binds the 23S rRNA. The sequence is that of Large ribosomal subunit protein bL31 (rpmE) from Mycoplasmopsis synoviae (strain 53) (Mycoplasma synoviae).